The primary structure comprises 42 residues: Cytochrome b559 subunit beta (42 aa).

A helical membrane pass occupies residues 17–33 (WLSIHALAVPTVFFLGA). Histidine 21 lines the heme pocket.

It belongs to the PsbE/PsbF family. In terms of assembly, heterodimer of an alpha subunit and a beta subunit. PSII is composed of 1 copy each of membrane proteins PsbA, PsbB, PsbC, PsbD, PsbE, PsbF, PsbH, PsbI, PsbJ, PsbK, PsbL, PsbM, PsbT, PsbX, PsbY, PsbZ, Psb30/Ycf12, at least 3 peripheral proteins of the oxygen-evolving complex and a large number of cofactors. It forms dimeric complexes. Heme b serves as cofactor.

It is found in the plastid. It localises to the chloroplast thylakoid membrane. This b-type cytochrome is tightly associated with the reaction center of photosystem II (PSII). PSII is a light-driven water:plastoquinone oxidoreductase that uses light energy to abstract electrons from H(2)O, generating O(2) and a proton gradient subsequently used for ATP formation. It consists of a core antenna complex that captures photons, and an electron transfer chain that converts photonic excitation into a charge separation. The polypeptide is Cytochrome b559 subunit beta (Tupiella akineta (Green alga)).